The primary structure comprises 932 residues: DNA mismatch repair protein MutS (932 aa).

615-622 (GPNMAGKS) serves as a coordination point for ATP.

Belongs to the DNA mismatch repair MutS family.

This protein is involved in the repair of mismatches in DNA. It is possible that it carries out the mismatch recognition step. This protein has a weak ATPase activity. The chain is DNA mismatch repair protein MutS from Clostridium botulinum (strain Kyoto / Type A2).